The sequence spans 146 residues: Hemoglobin subunit beta (146 aa).

Val1 carries the N-acetylvaline modification. A Globin domain is found at 2 to 146 (HLTAEEKSAV…VATALAHKYH (145 aa)). Position 12 is a phosphothreonine (Thr12). Ser44 carries the post-translational modification Phosphoserine. Lys59 is subject to N6-acetyllysine. His63 lines the heme b pocket. Lys82 carries the post-translational modification N6-acetyllysine. His92 is a binding site for heme b. Residue Cys93 is modified to S-nitrosocysteine. N6-acetyllysine is present on Lys144.

This sequence belongs to the globin family. As to quaternary structure, heterotetramer of two alpha chains and two beta chains. As to expression, red blood cells.

Its function is as follows. Involved in oxygen transport from the lung to the various peripheral tissues. This chain is Hemoglobin subunit beta (HBB), found in Cebus albifrons (White-fronted capuchin).